Here is a 162-residue protein sequence, read N- to C-terminus: UPF0114 protein PST_0950 (162 aa).

3 helical membrane-spanning segments follow: residues 15–35 (LLAPIYFGLAFALLALAIKFF), 53–73 (LVLTLLSLIDMALVGGLLVMV), and 136–156 (LMWYVIIHLTFVVSAFAMGYM).

This sequence belongs to the UPF0114 family.

Its subcellular location is the cell membrane. This Stutzerimonas stutzeri (strain A1501) (Pseudomonas stutzeri) protein is UPF0114 protein PST_0950.